Consider the following 201-residue polypeptide: Dephospho-CoA kinase (201 aa).

The DPCK domain occupies 6 to 201 (VMGLTGSIGM…RAIREKNPRG (196 aa)). 14 to 19 (GMGKSA) is a binding site for ATP.

This sequence belongs to the CoaE family.

It localises to the cytoplasm. It carries out the reaction 3'-dephospho-CoA + ATP = ADP + CoA + H(+). It functions in the pathway cofactor biosynthesis; coenzyme A biosynthesis; CoA from (R)-pantothenate: step 5/5. In terms of biological role, catalyzes the phosphorylation of the 3'-hydroxyl group of dephosphocoenzyme A to form coenzyme A. This Novosphingobium aromaticivorans (strain ATCC 700278 / DSM 12444 / CCUG 56034 / CIP 105152 / NBRC 16084 / F199) protein is Dephospho-CoA kinase.